The primary structure comprises 389 residues: Probable nitrate transporter NarT (389 aa).

Transmembrane regions (helical) follow at residues 14–34, 45–65, 69–89, 97–117, 139–159, 161–181, 211–231, 246–266, 268–288, 294–314, 331–351, and 353–373; these read TLSLVVGFMAWSIIAPLMPFI, ISIILAIPVILGSVLRVPFGY, IVGAKWVFFTSFIVLLFPIFF, GMLMASGFFLGVGGAIFSVGV, GNIGTAVSSFLAPPIAGIIGW, TTVRSYLIIIALFALIMFIFG, WYFITFGAFVAFGIFLPNYLV, GVFIALATFLRPIGGILGDKF, AVKVLMIDFVVMIIGAIILGI, LFTVGCLTISICAGIGNGLIF, IVSMMGGLGGFFPPLVITYVA, and LTGSSHLAFIFLAVFGCIALF.

The protein belongs to the major facilitator superfamily. Nitrate/nitrite porter (TC 2.A.1.8) family.

The protein resides in the cell membrane. Probably required for nitrate uptake under anoxic conditions. Also possibly involved in excretion of nitrite produced by the dissimilatory reduction of nitrate. This Staphylococcus aureus (strain bovine RF122 / ET3-1) protein is Probable nitrate transporter NarT (narT).